A 130-amino-acid polypeptide reads, in one-letter code: Follitropin subunit beta (130 aa).

A signal peptide spans 1–20; it reads MMKLIQLCILFWCWRAICCH. Disulfide bonds link C22/C70, C36/C85, C39/C123, C47/C101, C51/C103, and C106/C113. N-linked (GlcNAc...) asparagine glycans are attached at residues N26 and N43.

Belongs to the glycoprotein hormones subunit beta family. As to quaternary structure, heterodimer. The active follitropin is a heterodimer composed of an alpha chain/CGA shared with other hormones and a unique beta chain/FSHB shown here.

The protein localises to the secreted. Functionally, together with the alpha chain CGA constitutes follitropin, the follicle-stimulating hormone, and provides its biological specificity to the hormone heterodimer. Binds FSHR, a G protein-coupled receptor, on target cells to activate downstream signaling pathways. Follitropin is involved in follicle development and spermatogenesis in reproductive organs. In Mus musculus (Mouse), this protein is Follitropin subunit beta (Fshb).